Consider the following 292-residue polypeptide: Glycine--tRNA ligase alpha subunit (292 aa).

This sequence belongs to the class-II aminoacyl-tRNA synthetase family. In terms of assembly, tetramer of two alpha and two beta subunits.

It is found in the cytoplasm. The enzyme catalyses tRNA(Gly) + glycine + ATP = glycyl-tRNA(Gly) + AMP + diphosphate. The chain is Glycine--tRNA ligase alpha subunit from Syntrophus aciditrophicus (strain SB).